A 171-amino-acid polypeptide reads, in one-letter code: Adenine phosphoribosyltransferase (171 aa).

It belongs to the purine/pyrimidine phosphoribosyltransferase family. Homodimer.

Its subcellular location is the cytoplasm. The enzyme catalyses AMP + diphosphate = 5-phospho-alpha-D-ribose 1-diphosphate + adenine. Its pathway is purine metabolism; AMP biosynthesis via salvage pathway; AMP from adenine: step 1/1. In terms of biological role, catalyzes a salvage reaction resulting in the formation of AMP, that is energically less costly than de novo synthesis. This is Adenine phosphoribosyltransferase from Acetivibrio thermocellus (strain ATCC 27405 / DSM 1237 / JCM 9322 / NBRC 103400 / NCIMB 10682 / NRRL B-4536 / VPI 7372) (Clostridium thermocellum).